A 414-amino-acid polypeptide reads, in one-letter code: Glucose-6-phosphate isomerase (414 aa).

Glu-266 functions as the Proton donor in the catalytic mechanism. Residues His-292 and Lys-405 contribute to the active site.

Belongs to the GPI family.

The protein localises to the cytoplasm. It catalyses the reaction alpha-D-glucose 6-phosphate = beta-D-fructose 6-phosphate. The protein operates within carbohydrate biosynthesis; gluconeogenesis. It functions in the pathway carbohydrate degradation; glycolysis; D-glyceraldehyde 3-phosphate and glycerone phosphate from D-glucose: step 2/4. Catalyzes the reversible isomerization of glucose-6-phosphate to fructose-6-phosphate. This is Glucose-6-phosphate isomerase from Thermus thermophilus (strain ATCC BAA-163 / DSM 7039 / HB27).